Here is a 495-residue protein sequence, read N- to C-terminus: Guanosine-5'-triphosphate,3'-diphosphate pyrophosphatase (495 aa).

Belongs to the GppA/Ppx family. GppA subfamily.

It carries out the reaction guanosine 3'-diphosphate 5'-triphosphate + H2O = guanosine 3',5'-bis(diphosphate) + phosphate + H(+). It participates in purine metabolism; ppGpp biosynthesis; ppGpp from GTP: step 2/2. Its function is as follows. Catalyzes the conversion of pppGpp to ppGpp. Guanosine pentaphosphate (pppGpp) is a cytoplasmic signaling molecule which together with ppGpp controls the 'stringent response', an adaptive process that allows bacteria to respond to amino acid starvation, resulting in the coordinated regulation of numerous cellular activities. The sequence is that of Guanosine-5'-triphosphate,3'-diphosphate pyrophosphatase from Enterobacter sp. (strain 638).